Here is a 454-residue protein sequence, read N- to C-terminus: Protein disulfide-isomerase TMX3 (454 aa).

The signal sequence occupies residues 1–24 (MAAWKSWTALRLCATVVVLDMVVC). A Thioredoxin domain is found at 25–128 (KGFVEDLDES…KDDIIEFAHR (104 aa)). Residues 25-375 (KGFVEDLDES…TIVSIFKSSP (351 aa)) lie on the Lumenal side of the membrane. Residues Cys53 and Cys56 each act as nucleophile in the active site. An intrachain disulfide couples Cys53 to Cys56. 2 N-linked (GlcNAc...) asparagine glycosylation sites follow: Asn258 and Asn313. A helical membrane pass occupies residues 376-396 (LMGCFLFGLPLGVISIMCYGI). Over 397–454 (YTADTDGGYIEERYEVSKSENENQEQIEESKEQQEPSSGGSVVPTVQEPKDVLEKKKD) the chain is Cytoplasmic. The tract at residues 412–454 (VSKSENENQEQIEESKEQQEPSSGGSVVPTVQEPKDVLEKKKD) is disordered. The span at 444 to 454 (EPKDVLEKKKD) shows a compositional bias: basic and acidic residues. Residues 451–454 (KKKD) carry the Di-lysine motif motif.

This sequence belongs to the protein disulfide isomerase family. In terms of processing, N-glycosylated. As to expression, widely expressed. Expressed in brain, testis, lung, skin, kidney, uterus, bone, stomach, liver, prostate, placenta, eye and muscle.

It localises to the endoplasmic reticulum membrane. The catalysed reaction is Catalyzes the rearrangement of -S-S- bonds in proteins.. Probable disulfide isomerase, which participates in the folding of proteins containing disulfide bonds. May act as a dithiol oxidase. Acts as a regulator of endoplasmic reticulum-mitochondria contact sites via its ability to regulate redox signals. The sequence is that of Protein disulfide-isomerase TMX3 (TMX3) from Homo sapiens (Human).